Reading from the N-terminus, the 321-residue chain is Protein FAM110C (321 aa).

Disordered regions lie at residues 1–84 (MRAL…APAP) and 111–203 (RGSG…SQSD). Basic and acidic residues-rich tracts occupy residues 15–46 (LLPRDPAATRDPDAARPARRSAVERLAADRAK) and 131–145 (GKDKAPVPRTGDEGK). Low complexity predominate over residues 169–181 (APAARSAAPSSVP). Position 241 is a phosphoserine (S241).

This sequence belongs to the FAM110 family. As to quaternary structure, interacts with AKT1; the interaction is transient and follows AKT1 activation. Interacts with PPP2CA and alpha-tubulin. As to expression, detected in stomach, thyroid, trachea, adrenal gland and testis, and at low levels in prostate, ovary, intestine, colon, spinal cord and lymph node.

The protein localises to the cytoplasm. It localises to the cytoskeleton. The protein resides in the microtubule organizing center. Its subcellular location is the centrosome. It is found in the spindle pole. The protein localises to the nucleus. Functionally, may play a role in microtubule organization. May play a role in cell spreading and cell migration of epithelial cells; the function may involve the AKT1 signaling pathway. This Homo sapiens (Human) protein is Protein FAM110C (FAM110C).